The primary structure comprises 525 residues: Peptide chain release factor 3 (525 aa).

One can recognise a tr-type G domain in the interval 8–276 (AMRRTFAIIS…AFVKEAPPPQ (269 aa)). Residues 17–24 (SHPDAGKT), 85–89 (DTPGH), and 139–142 (NKMD) contribute to the GTP site.

Belongs to the TRAFAC class translation factor GTPase superfamily. Classic translation factor GTPase family. PrfC subfamily.

It is found in the cytoplasm. Its function is as follows. Increases the formation of ribosomal termination complexes and stimulates activities of RF-1 and RF-2. It binds guanine nucleotides and has strong preference for UGA stop codons. It may interact directly with the ribosome. The stimulation of RF-1 and RF-2 is significantly reduced by GTP and GDP, but not by GMP. This is Peptide chain release factor 3 from Coxiella burnetii (strain CbuK_Q154) (Coxiella burnetii (strain Q154)).